Reading from the N-terminus, the 182-residue chain is Tropomyosin-like protein (182 aa).

A coiled-coil region spans residues 1–68; that stretch reads FDRYNQILDE…ELEQRRTEQQ (68 aa). Residues 32–66 are compositionally biased toward basic and acidic residues; the sequence is DEETKKIKQEEAEMKKKIEGEASRKKLELEQRRTE. Disordered stretches follow at residues 32 to 81 and 140 to 160; these read DEET…GSTD and DQPA…DAGL. Low complexity predominate over residues 140–153; the sequence is DQPAQAGPEPAAPA.

It localises to the cytoplasm. The protein localises to the cytoskeleton. The chain is Tropomyosin-like protein from Pichia angusta (Yeast).